The sequence spans 830 residues: Receptor-like protein kinase HERK 1 (830 aa).

The first 24 residues, 1-24, serve as a signal peptide directing secretion; that stretch reads MGIEKFETFILISTISILLCICHG. Residues 25–405 lie on the Extracellular side of the membrane; sequence FTPVDNYLIN…SSSSSKSNLG (381 aa). N-linked (GlcNAc...) asparagine glycans are attached at residues N40, N146, N217, N280, and N381. The chain crosses the membrane as a helical span at residues 406-426; that stretch reads LIVGSAIGSLLAVVFLGSCFV. Over 427–830 the chain is Cytoplasmic; it reads LYKKRKRGQD…FSQLVKSEGR (404 aa). Positions 485–758 constitute a Protein kinase domain; the sequence is FDESRNIGVG…GDVLWNLEYA (274 aa). ATP is bound by residues 491–499 and K513; that span reads IGVGGFGKV. Catalysis depends on D609, which acts as the Proton acceptor.

This sequence belongs to the protein kinase superfamily. Ser/Thr protein kinase family. Post-translationally, autophosphorylated. As to expression, expressed in most vegetative tissues, including leaves, stems and roots, especially in cell elongation regions.

It is found in the cell membrane. Functionally, receptor-like protein kinase required for cell elongation during vegetative growth, mostly in a brassinosteroid-(BR-) independent manner. The sequence is that of Receptor-like protein kinase HERK 1 (HERK1) from Arabidopsis thaliana (Mouse-ear cress).